The following is a 495-amino-acid chain: SKA complex subunit 3 (495 aa).

Basic and acidic residues predominate over residues 119–135 (TKEAEERAERDAEKLDA). The segment at 119–165 (TKEAEERAERDAEKLDAAEEDEETERGDCDKVDQSVTPEKMPPPVDQ) is disordered. Position 295 is a phosphoserine (Ser295). Over residues 355–368 (KEDREEESKIHSES) the composition is skewed to basic and acidic residues. The disordered stretch occupies residues 355–391 (KEDREEESKIHSESQENSLRLPDLSTTNGTSWNDAPE). A compositionally biased stretch (polar residues) spans 378–387 (LSTTNGTSWN).

It belongs to the SKA3 family. In terms of assembly, component of the SKA complex, composed of ska1, ska2 and ska3.

The protein localises to the cytoplasm. It is found in the cytoskeleton. Its subcellular location is the spindle. The protein resides in the chromosome. It localises to the centromere. The protein localises to the kinetochore. Component of the SKA complex, a microtubule plus end-binding complex of the outer kinetochore that stabilizes spindle microtubule-kinetochore attachments, promotes alignment of chromosomes at the mitotic spindle equator (chromosome congression) and assists suppression of the spindle assembly checkpoint. Kinetochores, consisting of a centromere-associated inner segment and a microtubule-contacting outer segment, play a crucial role in chromosome segregation by mediating the physical connection between centromeric DNA and spindle microtubules. The outer kinetochore is made up of the ten-subunit KMN network complex, comprising the MIS12, NDC80 and KNL1 complexes, and auxiliary microtubule-associated components such as the SKA complex; together they connect the outer kinetochore with the inner kinetochore, bind microtubules, and mediate interactions with mitotic checkpoint proteins that delay anaphase until chromosomes are bioriented on the spindle. The SKA complex is loaded onto bioriented kinetochores and it facilitates chromosome congression by stabilizing microtubules, and end-on attachment of the NDC80 complex to depolymerizing spindle microtubules, thereby assisting the poleward-moving kinetochore in withstanding microtubule pulling forces. The complex associates with dynamic microtubule plus-ends and can track both depolymerizing and elongating microtubules. The complex recruits protein phosphatase 1 (PP1) to the kinetochore in prometaphase and metaphase, to oppose spindle assembly checkpoint signaling and promote the onset of anaphase. Within the complex, binds microtubules but with a much lower affinity than SKA1. During meiosis the SKA complex stabilizes the meiotic spindle and is required for its migration to the cortex. This chain is SKA complex subunit 3 (ska3), found in Danio rerio (Zebrafish).